We begin with the raw amino-acid sequence, 526 residues long: Tyrosine-protein kinase transforming protein Src (526 aa).

The tract at residues 1-57 (MGSSKSKPKDPSQRRCSLEPPDSTHHGGFPASQTPNKTAAPDTHRTPSRSFGTVATE) is disordered. The N-myristoyl glycine; by host moiety is linked to residue Gly-2. Over residues 7–25 (KPKDPSQRRCSLEPPDSTH) the composition is skewed to basic and acidic residues. An SH3 domain is found at 81–142 (GGVTTFVALY…PSNYVAPSDS (62 aa)). An SH2 domain is found at 148-245 (WYFGKITRRE…GLCHRLTNVC (98 aa)). In terms of domain architecture, Protein kinase spans 267-517 (LRLEVKLGQG…TFEYLQAQLL (251 aa)). Residues 273–281 (LGQGCFGEV) and Lys-295 each bind ATP. Catalysis depends on Asp-386, which acts as the Proton acceptor. A Phosphotyrosine; by autocatalysis modification is found at Tyr-416.

This sequence belongs to the protein kinase superfamily. Tyr protein kinase family. SRC subfamily. In terms of processing, the phosphorylated form is termed pp60v-src.

The enzyme catalyses L-tyrosyl-[protein] + ATP = O-phospho-L-tyrosyl-[protein] + ADP + H(+). In terms of biological role, this phosphoprotein, required for both the initiation and the maintenance of neoplastic transformation, is a protein kinase that catalyzes the phosphorylation of tyrosine residues in vitro. This Galliformes protein is Tyrosine-protein kinase transforming protein Src (V-SRC).